We begin with the raw amino-acid sequence, 219 residues long: MEYLSALNPSDLLRSVSNISSEFGRRVWTSAPPPQRPFRVCDHKRTIRKGLTAATRQELLAKALETLLLNGVLTLVLEEDGTAVDSEDFFQLLEDDTCLMVLQSGQSWSPTRSGVLSYGLGRERPKHSKDIARFTFDVYKQNPRDLFGSLNVKATFYGLYSMSCDFQGLGPKKVLRELLRWTSTLLQGLGHMLLGISSTLRHAVEGAEQWQQKGRLHSY.

One can recognise a CIDE-N domain in the interval 34 to 110 (PQRPFRVCDH…VLQSGQSWSP (77 aa)).

This sequence belongs to the CIDE family. Interacts with DFFA. Interacts with DFFB; inhibited by DFFB. Interacts with APOB. Interacts with PREB/SEC12; facilitating loading of SCAP-SREBP into COPII vesicles. As to quaternary structure, (Microbial infection) Interacts (via N-terminus) with HCV non-structural protein 5A (via N-terminus); this interaction seems to regulate the association of HCV particles with ApoE. Highly expressed in liver and small intestine and, at lower levels, in colon, kidney and spleen.

It localises to the lipid droplet. The protein localises to the endoplasmic reticulum membrane. The protein resides in the golgi apparatus. Its subcellular location is the cytoplasmic vesicle. It is found in the COPI-coated vesicle. Lipid transferase specifically expressed in hepatocytes, which promotes unilocular lipid droplet formation by mediating lipid droplet fusion. Lipid droplet fusion promotes their enlargement, restricting lipolysis and favoring lipid storage. Localizes on the lipid droplet surface, at focal contact sites between lipid droplets, and mediates atypical lipid droplet fusion by promoting directional net neutral lipid transfer from the smaller to larger lipid droplets. The transfer direction may be driven by the internal pressure difference between the contacting lipid droplet pair. Promotes lipid exchange and lipid droplet fusion in both small and large lipid droplet-containing hepatocytes. In addition to its role in lipid droplet fusion, also involved in cytoplasmic vesicle biogenesis and transport. Required for very-low-density lipoprotein (VLDL) lipidation and maturation. Probably involved in the biogenesis of VLDL transport vesicles by forming a COPII vesicle coat and facilitating the formation of endoplasmic reticulum-derived large vesicles. Also involved in sterol-regulated export of the SCAP-SREBP complex, composed of SCAP, SREBF1/SREBP1 and SREBF2/SREBP2, by promoting loading of SCAP-SREBP into COPII vesicles. May also activate apoptosis. Functionally, (Microbial infection) Involved in Hepatatis C virus (HCV) assembly and required for HCV entry into hepatocytes. The sequence is that of Lipid transferase CIDEB from Homo sapiens (Human).